The primary structure comprises 916 residues: MTDETVKSLAEEIQTPVERLVQQFADAGIKKTVSDSVSQKEKETLLAWLNRDKESTSQPEKLTLQRKVRSTLSVPGTGGKNKSVAIEVRKKRTYVNRDAVEKAQAAEQAQREAEEKARREAEEKAQREAQEKAQREAEEKAKREAEEAKKKAEEKAKREAEEAKREAAELAKREAAEKDKVKQNEKPKADKADQEKARRIAEQAELKRKTEEAQRRKAEEEARIAAEKARRLAEENAEKWTSDTSSETEGTDYHVTTSRYARDAEDESDAEVEGGRGRGRAAKAPRPKKNNRHSEKADREEARAAGRSNKKGKGRKNSTLQQGFNKPAAAVNRDVVIGETISVADLANKMAVKGSEVIKTMMKMGAMATINQVLDQETAQLVAEEMGHKVILRRENELEEQVMNDRDTSDEMAVSRAPVVTIMGHVDHGKTSLLDYIRSTKVASGEAGGITQHIGAYHVKTDKGEITFLDTPGHAAFTSMRARGAQVTDIVVLVVAADDGVMPQTIEAIQHAKAANVPVVVAVNKIDKPEADPDRVKTELSQYGILPEDWGGETQFIHVSAKQGLGIDELLDAILLQAEVLELKAVKEGMASGVVIESYLDKGRGPVATILVREGTLNKGDIVLCGFEYGRIRAMRNELGKEVQSAGPSMPVEILGLSNVPSAGDEATVVRDEKKAREVALYRQGKFREVKLARQQKSKLENMFANMEEGKVSELNIVLKTDVQGTCEAITDALVKLSTDEVKLKIIGSGVGGITETDATLAAASDAIILGFNVRADASARRIIEQESVDLRYYSVIYSLIDEIKSAMSGMLEPEYKQEIMGLAEVRDVFKSPKFGAIAGCMVVEGNIKRNNPIRVLRDNVVIYEGELESLRRFKDDVNEVRNGMECGIGVKNYNDVRVGDMIEVFQVIEIKRSID.

The disordered stretch occupies residues 50-326 (NRDKESTSQP…NSTLQQGFNK (277 aa)). Basic and acidic residues predominate over residues 109 to 241 (AQREAEEKAR…LAEENAEKWT (133 aa)). Residues 277–291 (GRGRAAKAPRPKKNN) show a composition bias toward basic residues. Residues 292–304 (RHSEKADREEARA) are compositionally biased toward basic and acidic residues. Residues 415 to 584 (SRAPVVTIMG…LLQAEVLELK (170 aa)) form the tr-type G domain. A G1 region spans residues 424-431 (GHVDHGKT). 424 to 431 (GHVDHGKT) contributes to the GTP binding site. The G2 stretch occupies residues 449 to 453 (GITQH). The tract at residues 470–473 (DTPG) is G3. GTP-binding positions include 470-474 (DTPGH) and 524-527 (NKID). The G4 stretch occupies residues 524 to 527 (NKID). A G5 region spans residues 560–562 (SAK).

It belongs to the TRAFAC class translation factor GTPase superfamily. Classic translation factor GTPase family. IF-2 subfamily.

The protein resides in the cytoplasm. In terms of biological role, one of the essential components for the initiation of protein synthesis. Protects formylmethionyl-tRNA from spontaneous hydrolysis and promotes its binding to the 30S ribosomal subunits. Also involved in the hydrolysis of GTP during the formation of the 70S ribosomal complex. This Proteus mirabilis (strain HI4320) protein is Translation initiation factor IF-2.